We begin with the raw amino-acid sequence, 63 residues long: Large ribosomal subunit protein uL29 (63 aa).

It belongs to the universal ribosomal protein uL29 family.

The polypeptide is Large ribosomal subunit protein uL29 (Klebsiella pneumoniae (strain 342)).